The following is a 540-amino-acid chain: Chaperonin GroEL (540 aa).

Residues 30-33 (TLAP), Lys-51, 87-91 (DGTTT), Gly-415, 479-481 (NAA), and Asp-495 each bind ATP.

The protein belongs to the chaperonin (HSP60) family. As to quaternary structure, forms a cylinder of 14 subunits composed of two heptameric rings stacked back-to-back. Interacts with the co-chaperonin GroES.

It is found in the cytoplasm. It catalyses the reaction ATP + H2O + a folded polypeptide = ADP + phosphate + an unfolded polypeptide.. Together with its co-chaperonin GroES, plays an essential role in assisting protein folding. The GroEL-GroES system forms a nano-cage that allows encapsulation of the non-native substrate proteins and provides a physical environment optimized to promote and accelerate protein folding. In Methylovorus sp. (strain SS1 / DSM 11726), this protein is Chaperonin GroEL.